The primary structure comprises 120 residues: Large ribosomal subunit protein uL18 (120 aa).

This sequence belongs to the universal ribosomal protein uL18 family. Part of the 50S ribosomal subunit; part of the 5S rRNA/L5/L18/L25 subcomplex. Contacts the 5S and 23S rRNAs.

This is one of the proteins that bind and probably mediate the attachment of the 5S RNA into the large ribosomal subunit, where it forms part of the central protuberance. The sequence is that of Large ribosomal subunit protein uL18 from Paramagnetospirillum magneticum (strain ATCC 700264 / AMB-1) (Magnetospirillum magneticum).